We begin with the raw amino-acid sequence, 824 residues long: Cell division cycle protein 27 homolog (824 aa).

TPR repeat units follow at residues 6-35 (EPVQ…YAEV), 38-65 (EEAL…KGHS), 67-99 (TTPQ…VFNK), and 115-145 (CFTL…LSLN). Phosphothreonine is present on residues Thr-205, Thr-209, and Thr-244. The interval 287–422 (LETPSPGDGS…TNKGGITQPN (136 aa)) is disordered. Ser-291 is subject to Phosphoserine. Phosphothreonine is present on Thr-313. Polar residues predominate over residues 326-341 (QTGTKSVFSQSGNSRE). A Phosphoserine modification is found at Ser-339. Residues 348-361 (QTQSSGPQTSTTPQ) show a composition bias toward low complexity. Residues 362 to 371 (VLSPTITSPP) are compositionally biased toward polar residues. Thr-366 bears the Phosphothreonine mark. Phosphoserine is present on residues Ser-379 and Ser-386. Residues 380 to 390 (RLFTSDSSTTK) show a composition bias toward polar residues. Residues 395-413 (KLKMKFPPKIPNRKTKSKT) show a composition bias toward basic residues. Ser-426 is subject to Phosphoserine. The residue at position 430 (Thr-430) is a Phosphothreonine. Phosphoserine occurs at positions 435 and 438. Thr-446 is subject to Phosphothreonine. TPR repeat units lie at residues 465 to 495 (LLRE…PSHH), 499 to 528 (GWVL…VRRI), 533 to 563 (VEGM…TDMD), 567 to 598 (PEAW…QVDP), 601 to 631 (AYAY…IRVN), 635 to 667 (YNAW…INPQ), 670 to 702 (VLLC…DPKN), 704 to 734 (LCKF…QIVP), and 737 to 768 (SLVY…DLDP). A disordered region spans residues 781 to 824 (KRYLPDDEEPITQEEQIMGTDESQESSMTDADDTQLHAAESDEF). Ser-821 is subject to Phosphoserine.

Belongs to the APC3/CDC27 family. As to quaternary structure, homodimer. The mammalian APC/C is composed at least of 14 distinct subunits ANAPC1, ANAPC2, CDC27/APC3, ANAPC4, ANAPC5, CDC16/APC6, ANAPC7, CDC23/APC8, ANAPC10, ANAPC11, CDC26/APC12, ANAPC13, ANAPC15 and ANAPC16 that assemble into a complex of at least 19 chains with a combined molecular mass of around 1.2 MDa; APC/C interacts with FZR1 and FBXO5. Interacts with RB. Interacts with FAM168B/MANI. Interacts with MCPH1. In terms of processing, phosphorylated. Phosphorylation on Ser-426 and Thr-446 occurs specifically during mitosis.

It localises to the nucleus. Its subcellular location is the cytoplasm. The protein localises to the cytoskeleton. The protein resides in the spindle. It participates in protein modification; protein ubiquitination. Its function is as follows. Component of the anaphase promoting complex/cyclosome (APC/C), a cell cycle-regulated E3 ubiquitin ligase that controls progression through mitosis and the G1 phase of the cell cycle. The APC/C complex acts by mediating ubiquitination and subsequent degradation of target proteins: it mainly mediates the formation of 'Lys-11'-linked polyubiquitin chains and, to a lower extent, the formation of 'Lys-48'- and 'Lys-63'-linked polyubiquitin chains. The APC/C complex catalyzes assembly of branched 'Lys-11'-/'Lys-48'-linked branched ubiquitin chains on target proteins. This Homo sapiens (Human) protein is Cell division cycle protein 27 homolog (CDC27).